A 481-amino-acid chain; its full sequence is Serralysin B (481 aa).

The propeptide occupies 1 to 15 (MQQNEKASLNTSAAA). His189 is a Zn(2+) binding site. Glu190 is an active-site residue. Positions 193 and 230 each coordinate Zn(2+). Positions 267, 269, 271, 299, 301, 302, 304, 341, 343, 348, 350, 352, 357, 359, 361, 365, 366, 367, 368, 370, 374, 377, 379, 383, 384, 385, 386, 388, 397, 404, and 414 each coordinate Ca(2+). Hemolysin-type calcium-binding repeat units follow at residues 346–363 (IGGS…DNIL), 364–381 (QGGA…ADTL), and 382–399 (TGGA…QDST).

The protein belongs to the peptidase M10B family. It depends on Ca(2+) as a cofactor. Zn(2+) serves as cofactor.

The protein localises to the secreted. The catalysed reaction is Preferential cleavage of bonds with hydrophobic residues in P1'.. The sequence is that of Serralysin B (prtB) from Dickeya chrysanthemi (Pectobacterium chrysanthemi).